A 319-amino-acid polypeptide reads, in one-letter code: Glutathione synthetase (319 aa).

Positions 127–311 (KIFVTEFADL…VASLLWDAIE (185 aa)) constitute an ATP-grasp domain. 153-209 (RNEMGDIILKPLYGNGGAGVFHSARDDRNFSSLLEMFGQMFREPYIAQEYLPDVRKG) contributes to the ATP binding site. Mg(2+) contacts are provided by Glu-282 and Asn-284.

This sequence belongs to the prokaryotic GSH synthase family. Mg(2+) is required as a cofactor. The cofactor is Mn(2+).

It carries out the reaction gamma-L-glutamyl-L-cysteine + glycine + ATP = glutathione + ADP + phosphate + H(+). It participates in sulfur metabolism; glutathione biosynthesis; glutathione from L-cysteine and L-glutamate: step 2/2. The polypeptide is Glutathione synthetase (Agrobacterium fabrum (strain C58 / ATCC 33970) (Agrobacterium tumefaciens (strain C58))).